The following is a 355-amino-acid chain: Lipoyl synthase (355 aa).

The 49-residue stretch at 7–55 folds into the RPE1 insert domain; the sequence is HLSKFAYREEFAGNTEVLATAAYKEDCADASTGLTPKLPLEVEFGKMSK. The [4Fe-4S] cluster site is built by Cys-86, Cys-91, Cys-97, Cys-112, Cys-116, Cys-119, and Ser-325. A Radical SAM core domain is found at 98–314; sequence WSKKHATVMI…ERVARTKGFL (217 aa).

It belongs to the radical SAM superfamily. Lipoyl synthase family. It depends on [4Fe-4S] cluster as a cofactor.

It is found in the cytoplasm. It carries out the reaction [[Fe-S] cluster scaffold protein carrying a second [4Fe-4S](2+) cluster] + N(6)-octanoyl-L-lysyl-[protein] + 2 oxidized [2Fe-2S]-[ferredoxin] + 2 S-adenosyl-L-methionine + 4 H(+) = [[Fe-S] cluster scaffold protein] + N(6)-[(R)-dihydrolipoyl]-L-lysyl-[protein] + 4 Fe(3+) + 2 hydrogen sulfide + 2 5'-deoxyadenosine + 2 L-methionine + 2 reduced [2Fe-2S]-[ferredoxin]. It functions in the pathway protein modification; protein lipoylation via endogenous pathway; protein N(6)-(lipoyl)lysine from octanoyl-[acyl-carrier-protein]: step 2/2. In terms of biological role, catalyzes the radical-mediated insertion of two sulfur atoms into the C-6 and C-8 positions of the octanoyl moiety bound to the lipoyl domains of lipoate-dependent enzymes, thereby converting the octanoylated domains into lipoylated derivatives. The protein is Lipoyl synthase of Rickettsia bellii (strain RML369-C).